The following is a 753-amino-acid chain: MADKRKLQGEIDRCLKKVSEGVEQFEDIWQKLHNAANANQKEKYEADLKKEIKKLQRLRDQIKTWVASNEIKDKRQLIDNRKLIETQMERFKVVERETKTKAYSKEGLGLAQKVDPAQKEKEEVGQWLTNTIDTLNMQVDQFESEVESLSVQTRKKKGDKDKQDRIEGLKRHIEKHRYHVRMLETILRMLDNDSILVDAIRKIKDDVEYYVDSSQDPDFEENEFLYDDLDLEDIPQALVATSPPSHSHMEDEIFNQSSSTPTSTTSSSPIPPSPANCTTENSEDDKKRGRSTDSEVSQSPAKNGSKPVHSNQHPQSPAVPPTYPSGPPPAASALSTTPGNNGVPAPAAPPSALGPKASPAPSHNSGTPAPYAQAVAPPAPSGPSTTQPRPPSVQPSGGGGGGSGGGGSSSSSNSSAGGGAGKQNGATSYSSVVADSPAEVALSSSGGNNASSQALGPPSGPHNPPPSTSKEPSAAAPTGAGGVAPGSGNNSGGPSLLVPLPVNPPSSPTPSFSDAKAAGALLNGPPQFSTAPEIKAPEPLSSLKSMAERAAISSGIEDPVPTLHLTERDIILSSTSAPPASAQPPLQLSEVNIPLSLGVCPLGPVPLTKEQLYQQAMEEAAWHHMPHPSDSERIRQYLPRNPCPTPPYHHQMPPPHSDTVEFYQRLSTETLFFIFYYLEGTKAQYLAAKALKKQSWRFHTKYMMWFQRHEEPKTITDEFEQGTYIYFDYEKWGQRKKEGFTFEYRYLEDRDLQ.

A disordered region spans residues 240–534 (ATSPPSHSHM…PPQFSTAPEI (295 aa)). A compositionally biased stretch (low complexity) spans 257-268 (SSSTPTSTTSSS). Positions 284 to 293 (DDKKRGRSTD) are enriched in basic and acidic residues. Position 292 is a phosphothreonine (Thr292). Positions 294–315 (SEVSQSPAKNGSKPVHSNQHPQ) are enriched in polar residues. Ser299 is modified (phosphoserine). Residues 317–330 (PAVPPTYPSGPPPA) are compositionally biased toward pro residues. Residues 350-376 (PSALGPKASPAPSHNSGTPAPYAQAVA) are compositionally biased toward low complexity. Over residues 396–408 (SGGGGGGSGGGGS) the composition is skewed to gly residues. Positions 424–433 (NGATSYSSVV) are enriched in polar residues. Over residues 441–457 (ALSSSGGNNASSQALGP) the composition is skewed to low complexity. A compositionally biased stretch (pro residues) spans 458 to 467 (PSGPHNPPPS). Gly residues predominate over residues 479 to 491 (GAGGVAPGSGNNS). Ser542 is modified (phosphoserine). Residues 661–753 (EFYQRLSTET…YRYLEDRDLQ (93 aa)) form a repressor domain region.

This sequence belongs to the CNOT2/3/5 family. As to quaternary structure, component of the CCR4-NOT complex; distinct complexes seem to exist that differ in the participation of probably mutually exclusive catalytic subunits. In the complex interacts directly with CNOT2. Interacts with TIP120B and NANOS2. Interacts with EBF1. Interacts in an RNA-independent manner with BICC1 (via KH domains). As to expression, ubiquitous. Highly expressed in brain, heart, thymus, spleen, kidney, liver, small intestine, lung and peripheral blood leukocytes.

The protein resides in the cytoplasm. It is found in the nucleus. Its subcellular location is the P-body. Component of the CCR4-NOT complex which is one of the major cellular mRNA deadenylases and is linked to various cellular processes including bulk mRNA degradation, miRNA-mediated repression, translational repression during translational initiation and general transcription regulation. Additional complex functions may be a consequence of its influence on mRNA expression. May be involved in metabolic regulation; may be involved in recruitment of the CCR4-NOT complex to deadenylation target mRNAs involved in energy metabolism. Involved in mitotic progression and regulation of the spindle assembly checkpoint by regulating the stability of MAD1L1 mRNA. Can repress transcription and may link the CCR4-NOT complex to transcriptional regulation; the repressive function may involve histone deacetylases. Involved in the maintenance of embryonic stem (ES) cell identity. In Homo sapiens (Human), this protein is CCR4-NOT transcription complex subunit 3.